A 307-amino-acid chain; its full sequence is Aspartate carbamoyltransferase catalytic subunit (307 aa).

The carbamoyl phosphate site is built by R54 and T55. K83 contacts L-aspartate. Carbamoyl phosphate-binding residues include R104, H132, and Q135. L-aspartate-binding residues include R165 and R228. Carbamoyl phosphate-binding residues include L267 and P268.

Belongs to the aspartate/ornithine carbamoyltransferase superfamily. ATCase family. In terms of assembly, heterododecamer (2C3:3R2) of six catalytic PyrB chains organized as two trimers (C3), and six regulatory PyrI chains organized as three dimers (R2).

It carries out the reaction carbamoyl phosphate + L-aspartate = N-carbamoyl-L-aspartate + phosphate + H(+). It functions in the pathway pyrimidine metabolism; UMP biosynthesis via de novo pathway; (S)-dihydroorotate from bicarbonate: step 2/3. Functionally, catalyzes the condensation of carbamoyl phosphate and aspartate to form carbamoyl aspartate and inorganic phosphate, the committed step in the de novo pyrimidine nucleotide biosynthesis pathway. This Clostridium botulinum (strain Eklund 17B / Type B) protein is Aspartate carbamoyltransferase catalytic subunit.